Reading from the N-terminus, the 623-residue chain is UvrABC system protein C (623 aa).

One can recognise a GIY-YIG domain in the interval 13-92 (DKPGVYIMKN…IKKYKPRYNI (80 aa)). Residues 204–239 (NDIIRELKEEMEKASMNLDFEKAADLRDKMLAAQKV) form the UVR domain.

Belongs to the UvrC family. In terms of assembly, interacts with UvrB in an incision complex.

The protein localises to the cytoplasm. Its function is as follows. The UvrABC repair system catalyzes the recognition and processing of DNA lesions. UvrC both incises the 5' and 3' sides of the lesion. The N-terminal half is responsible for the 3' incision and the C-terminal half is responsible for the 5' incision. In Clostridium acetobutylicum (strain ATCC 824 / DSM 792 / JCM 1419 / IAM 19013 / LMG 5710 / NBRC 13948 / NRRL B-527 / VKM B-1787 / 2291 / W), this protein is UvrABC system protein C.